Here is a 321-residue protein sequence, read N- to C-terminus: Lipoyl synthase (321 aa).

Residues Cys68, Cys73, Cys79, Cys94, Cys98, Cys101, and Ser308 each coordinate [4Fe-4S] cluster. The region spanning 80-297 (FNHGTATFMI…KEIALELGFT (218 aa)) is the Radical SAM core domain.

The protein belongs to the radical SAM superfamily. Lipoyl synthase family. The cofactor is [4Fe-4S] cluster.

It localises to the cytoplasm. The enzyme catalyses [[Fe-S] cluster scaffold protein carrying a second [4Fe-4S](2+) cluster] + N(6)-octanoyl-L-lysyl-[protein] + 2 oxidized [2Fe-2S]-[ferredoxin] + 2 S-adenosyl-L-methionine + 4 H(+) = [[Fe-S] cluster scaffold protein] + N(6)-[(R)-dihydrolipoyl]-L-lysyl-[protein] + 4 Fe(3+) + 2 hydrogen sulfide + 2 5'-deoxyadenosine + 2 L-methionine + 2 reduced [2Fe-2S]-[ferredoxin]. It participates in protein modification; protein lipoylation via endogenous pathway; protein N(6)-(lipoyl)lysine from octanoyl-[acyl-carrier-protein]: step 2/2. Catalyzes the radical-mediated insertion of two sulfur atoms into the C-6 and C-8 positions of the octanoyl moiety bound to the lipoyl domains of lipoate-dependent enzymes, thereby converting the octanoylated domains into lipoylated derivatives. This Vibrio atlanticus (strain LGP32) (Vibrio splendidus (strain Mel32)) protein is Lipoyl synthase.